Reading from the N-terminus, the 354-residue chain is Protein RecA (354 aa).

67–74 provides a ligand contact to ATP; it reads GPESSGKT.

Belongs to the RecA family.

Its subcellular location is the cytoplasm. Can catalyze the hydrolysis of ATP in the presence of single-stranded DNA, the ATP-dependent uptake of single-stranded DNA by duplex DNA, and the ATP-dependent hybridization of homologous single-stranded DNAs. It interacts with LexA causing its activation and leading to its autocatalytic cleavage. The chain is Protein RecA from Chlamydia muridarum (strain MoPn / Nigg).